Consider the following 63-residue polypeptide: Sperm protamine P1 (63 aa).

The tract at residues 1–63 is disordered; sequence MARYRRHSRS…RYSRRGRRRY (63 aa).

It belongs to the protamine P1 family. In terms of tissue distribution, testis.

The protein localises to the nucleus. It is found in the chromosome. Its function is as follows. Protamines substitute for histones in the chromatin of sperm during the haploid phase of spermatogenesis. They compact sperm DNA into a highly condensed, stable and inactive complex. This is Sperm protamine P1 (PRM1) from Pseudantechinus macdonnellensis (Fat-tailed marsupial mouse).